We begin with the raw amino-acid sequence, 268 residues long: Tryptophan synthase alpha chain (268 aa).

Residues Glu49 and Asp60 each act as proton acceptor in the active site.

Belongs to the TrpA family. As to quaternary structure, tetramer of two alpha and two beta chains.

It catalyses the reaction (1S,2R)-1-C-(indol-3-yl)glycerol 3-phosphate + L-serine = D-glyceraldehyde 3-phosphate + L-tryptophan + H2O. It functions in the pathway amino-acid biosynthesis; L-tryptophan biosynthesis; L-tryptophan from chorismate: step 5/5. The alpha subunit is responsible for the aldol cleavage of indoleglycerol phosphate to indole and glyceraldehyde 3-phosphate. This chain is Tryptophan synthase alpha chain, found in Escherichia coli O139:H28 (strain E24377A / ETEC).